The sequence spans 282 residues: Ribosomal RNA small subunit methyltransferase A (282 aa).

Residues Asn28, Leu30, Gly55, Glu77, Asp103, and Asn122 each contribute to the S-adenosyl-L-methionine site.

The protein belongs to the class I-like SAM-binding methyltransferase superfamily. rRNA adenine N(6)-methyltransferase family. RsmA subfamily.

Its subcellular location is the cytoplasm. The enzyme catalyses adenosine(1518)/adenosine(1519) in 16S rRNA + 4 S-adenosyl-L-methionine = N(6)-dimethyladenosine(1518)/N(6)-dimethyladenosine(1519) in 16S rRNA + 4 S-adenosyl-L-homocysteine + 4 H(+). In terms of biological role, specifically dimethylates two adjacent adenosines (A1518 and A1519) in the loop of a conserved hairpin near the 3'-end of 16S rRNA in the 30S particle. May play a critical role in biogenesis of 30S subunits. This is Ribosomal RNA small subunit methyltransferase A from Paracoccus denitrificans (strain Pd 1222).